A 325-amino-acid polypeptide reads, in one-letter code: NADH-quinone oxidoreductase subunit H (325 aa).

Transmembrane regions (helical) follow at residues 11 to 31 (VLIA…CGAL), 81 to 101 (MIFT…FAIV), 114 to 134 (IGIL…LFAG), 149 to 169 (ASAQ…GVVA), 186 to 206 (MWNV…GVAV), 237 to 257 (FFVG…TMFF), 265 to 285 (LPPF…FILI), and 304 to 324 (ICLP…LYNA).

Belongs to the complex I subunit 1 family. As to quaternary structure, NDH-1 is composed of 13 different subunits. Subunits NuoA, H, J, K, L, M, N constitute the membrane sector of the complex.

It localises to the cell inner membrane. The catalysed reaction is a quinone + NADH + 5 H(+)(in) = a quinol + NAD(+) + 4 H(+)(out). Functionally, NDH-1 shuttles electrons from NADH, via FMN and iron-sulfur (Fe-S) centers, to quinones in the respiratory chain. The immediate electron acceptor for the enzyme in this species is believed to be ubiquinone. Couples the redox reaction to proton translocation (for every two electrons transferred, four hydrogen ions are translocated across the cytoplasmic membrane), and thus conserves the redox energy in a proton gradient. This subunit may bind ubiquinone. The polypeptide is NADH-quinone oxidoreductase subunit H (Photorhabdus laumondii subsp. laumondii (strain DSM 15139 / CIP 105565 / TT01) (Photorhabdus luminescens subsp. laumondii)).